We begin with the raw amino-acid sequence, 462 residues long: MFILIIKCGIMEKEVISSREFIDRFVECLEKGEDFKLKDCVVEGNVDILNIYEMIKDKELKGGYIEKKDDEIVVNINIKVDIYNVEFNGDFRFFVNMEYQIVISVFNGNAYFRVITFKGSVYFIRTIFNGDVDFIDTIFEENAYFSVTAFKGNIINFSGTIFNKESHFKSTTFEGNTYFSVTTFNIAEFYNSTFKSHVYFDDISFNLLSFTDCRFRDDVSFKKIDKENFKGLAIFLKTQFLNKHTTIENFQLSKTSFLKTDVREVLLCDVKKEEILSHKILRIKEDSGNKDKDLENKLKELLGLSYKYIIDQFNYKSVLAEYRNLRISIENNRTYIEASNLYKMEMELIKEFSNGRFEKFIIGAYGAISDYGESMEKTGKWILGSMILFTILASILRFKGMEWDIFKIIEFWWISFWEVIRLFLQIGTEDKSLWILEPIIRVTSLILLGNLYIAVRRKLSRK.

The next 2 helical transmembrane spans lie at 381–401 and 433–453; these read WILG…FKGM and LWIL…NLYI.

It localises to the cell membrane. This is an uncharacterized protein from Methanocaldococcus jannaschii (strain ATCC 43067 / DSM 2661 / JAL-1 / JCM 10045 / NBRC 100440) (Methanococcus jannaschii).